Reading from the N-terminus, the 476-residue chain is Aspartyl/glutamyl-tRNA(Asn/Gln) amidotransferase subunit B (476 aa).

It belongs to the GatB/GatE family. GatB subfamily. As to quaternary structure, heterotrimer of A, B and C subunits.

The catalysed reaction is L-glutamyl-tRNA(Gln) + L-glutamine + ATP + H2O = L-glutaminyl-tRNA(Gln) + L-glutamate + ADP + phosphate + H(+). It carries out the reaction L-aspartyl-tRNA(Asn) + L-glutamine + ATP + H2O = L-asparaginyl-tRNA(Asn) + L-glutamate + ADP + phosphate + 2 H(+). Its function is as follows. Allows the formation of correctly charged Asn-tRNA(Asn) or Gln-tRNA(Gln) through the transamidation of misacylated Asp-tRNA(Asn) or Glu-tRNA(Gln) in organisms which lack either or both of asparaginyl-tRNA or glutaminyl-tRNA synthetases. The reaction takes place in the presence of glutamine and ATP through an activated phospho-Asp-tRNA(Asn) or phospho-Glu-tRNA(Gln). The polypeptide is Aspartyl/glutamyl-tRNA(Asn/Gln) amidotransferase subunit B (Lactobacillus gasseri (strain ATCC 33323 / DSM 20243 / BCRC 14619 / CIP 102991 / JCM 1131 / KCTC 3163 / NCIMB 11718 / NCTC 13722 / AM63)).